The sequence spans 76 residues: Alpha/kappa-conotoxin pl14a (76 aa).

Positions 1 to 24 (MPSVRSVTCCCLLWMMFSVQLVTP) are cleaved as a signal peptide. Residues 25–39 (GSPGTAQLSGHRTAR) constitute a propeptide that is removed on maturation. 2 disulfides stabilise this stretch: C46–C61 and C50–C63. The residue at position 64 (R64) is an Arginine amide. Residues 65-76 (GKRDAVSSSMAV) constitute a propeptide that is removed on maturation.

This sequence belongs to the conotoxin J superfamily. Expressed by the venom duct.

The protein resides in the secreted. Functionally, highly inhibits both nicotinic acetylcholine receptors (neuronal (IC(50)=8.7 uM for alpha-3/beta-4) and muscular (IC(50)=0.54 uM for alpha-1-beta-1-epsilon-delta (CHRNA1-CHRNB1-CHRND-CHRNE)) subtypes) and the voltage-gated potassium channel Kv1.6/KCNA6 subtype (IC(50)=1.59 uM). This Conus planorbis (Planorbis cone) protein is Alpha/kappa-conotoxin pl14a.